Reading from the N-terminus, the 483-residue chain is Protein nucleotidyltransferase YdiU (483 aa).

Residues glycine 81, glycine 83, arginine 84, lysine 103, aspartate 115, glycine 116, arginine 166, and arginine 173 each contribute to the ATP site. Residue aspartate 244 is the Proton acceptor of the active site. Residues asparagine 245 and aspartate 254 each contribute to the Mg(2+) site. Residue aspartate 254 participates in ATP binding.

Belongs to the SELO family. Mg(2+) serves as cofactor. It depends on Mn(2+) as a cofactor.

It carries out the reaction L-seryl-[protein] + ATP = 3-O-(5'-adenylyl)-L-seryl-[protein] + diphosphate. The enzyme catalyses L-threonyl-[protein] + ATP = 3-O-(5'-adenylyl)-L-threonyl-[protein] + diphosphate. It catalyses the reaction L-tyrosyl-[protein] + ATP = O-(5'-adenylyl)-L-tyrosyl-[protein] + diphosphate. The catalysed reaction is L-histidyl-[protein] + UTP = N(tele)-(5'-uridylyl)-L-histidyl-[protein] + diphosphate. It carries out the reaction L-seryl-[protein] + UTP = O-(5'-uridylyl)-L-seryl-[protein] + diphosphate. The enzyme catalyses L-tyrosyl-[protein] + UTP = O-(5'-uridylyl)-L-tyrosyl-[protein] + diphosphate. Functionally, nucleotidyltransferase involved in the post-translational modification of proteins. It can catalyze the addition of adenosine monophosphate (AMP) or uridine monophosphate (UMP) to a protein, resulting in modifications known as AMPylation and UMPylation. This Shewanella pealeana (strain ATCC 700345 / ANG-SQ1) protein is Protein nucleotidyltransferase YdiU.